The sequence spans 222 residues: Kunitz trypsin inhibitor 3 (222 aa).

An N-terminal signal peptide occupies residues 1–23 (MEKLTLSFITLTVLSAIFTAASA). Asn-65 carries N-linked (GlcNAc...) asparagine glycosylation. Disulfide bonds link Cys-72/Cys-119 and Cys-165/Cys-173. Asn-175 is a glycosylation site (N-linked (GlcNAc...) asparagine).

It belongs to the protease inhibitor I3 (leguminous Kunitz-type inhibitor) family.

Its function is as follows. Exhibits Kunitz trypsin protease inhibitor activity. This Arabidopsis thaliana (Mouse-ear cress) protein is Kunitz trypsin inhibitor 3.